The sequence spans 749 residues: Photosystem I P700 chlorophyll a apoprotein A2 (749 aa).

A run of 8 helical transmembrane segments spans residues 46–69, 135–158, 175–199, 273–291, 343–366, 382–408, 430–452, and 532–550; these read LFST…FHIA, LYQG…LHLQ, MNHH…HVAI, ISHH…GHMY, LHFQ…HHMG, AALY…IFFV, ALIS…LYLH, and FLVH…LILI. Residues Cys-574 and Cys-583 each contribute to the [4Fe-4S] cluster site. Helical transmembrane passes span 590–611 and 658–680; these read STYM…YWHW and LSPW…MFLI. 3 residues coordinate divinyl chlorophyll a: His-669, Met-677, and Tyr-685. A phylloquinone-binding site is contributed by Trp-686. A helical membrane pass occupies residues 722–742; the sequence is LVGVTHFAVGNIFTFGAFVIA.

The protein belongs to the PsaA/PsaB family. As to quaternary structure, the PsaA/B heterodimer binds the P700 chlorophyll special pair and subsequent electron acceptors. PSI consists of a core antenna complex that captures photons, and an electron transfer chain that converts photonic excitation into a charge separation. The cyanobacterial PSI reaction center is composed of one copy each of PsaA,B,C,D,E,F,I,J,K,L,M and X, and forms trimeric complexes. It depends on PSI electron transfer chain: 5 divinyl chlorophyll a, 1 divinyl chlorophyll a', 2 phylloquinones and 3 4Fe-4S clusters. PSI core antenna: 90 divinyl chlorophyll a, 22 carotenoids, 3 phospholipids and 1 galactolipid. P700 is a divinyl chlorophyll a/divinyl chlorophyll a' dimer, A0 is one or more divinyl chlorophyll a, A1 is one or both phylloquinones and FX is a shared 4Fe-4S iron-sulfur center. as a cofactor.

The protein localises to the cellular thylakoid membrane. It catalyses the reaction reduced [plastocyanin] + hnu + oxidized [2Fe-2S]-[ferredoxin] = oxidized [plastocyanin] + reduced [2Fe-2S]-[ferredoxin]. Functionally, psaA and PsaB bind P700, the primary electron donor of photosystem I (PSI), as well as the electron acceptors A0, A1 and FX. PSI is a plastocyanin/cytochrome c6-ferredoxin oxidoreductase, converting photonic excitation into a charge separation, which transfers an electron from the donor P700 chlorophyll pair to the spectroscopically characterized acceptors A0, A1, FX, FA and FB in turn. Oxidized P700 is reduced on the lumenal side of the thylakoid membrane by plastocyanin or cytochrome c6. The polypeptide is Photosystem I P700 chlorophyll a apoprotein A2 (Prochlorococcus marinus (strain MIT 9313)).